The chain runs to 177 residues: tRNA (cytidine(56)-2'-O)-methyltransferase (177 aa).

S-adenosyl-L-methionine contacts are provided by residues Leu84 and 109–113 (GAEKV).

The protein belongs to the aTrm56 family. In terms of assembly, homodimer.

The protein localises to the cytoplasm. The enzyme catalyses cytidine(56) in tRNA + S-adenosyl-L-methionine = 2'-O-methylcytidine(56) in tRNA + S-adenosyl-L-homocysteine + H(+). Functionally, specifically catalyzes the AdoMet-dependent 2'-O-ribose methylation of cytidine at position 56 in tRNAs. The protein is tRNA (cytidine(56)-2'-O)-methyltransferase of Methanosarcina acetivorans (strain ATCC 35395 / DSM 2834 / JCM 12185 / C2A).